A 215-amino-acid chain; its full sequence is Somatotropin (215 aa).

Residues 1 to 25 (MAPGARISLLLLITFTLLGPQRSGA) form the signal peptide. His44 contacts Zn(2+). Cys77 and Cys188 are joined by a disulfide. Ser130 carries the post-translational modification Phosphoserine. Residue Glu197 participates in Zn(2+) binding. Residues Cys205 and Cys213 are joined by a disulfide bond.

Belongs to the somatotropin/prolactin family.

The protein localises to the secreted. In terms of biological role, plays an important role in growth control. Its major role in stimulating body growth is to stimulate the liver and other tissues to secrete IGF1. It stimulates both the differentiation and proliferation of myoblasts. It also stimulates amino acid uptake and protein synthesis in muscle and other tissues. This is Somatotropin (GH1) from Trichosurus vulpecula (Brush-tailed possum).